A 354-amino-acid polypeptide reads, in one-letter code: DNA polymerase IV (354 aa).

One can recognise a UmuC domain in the interval 14–198; the sequence is IIHIDMDAFF…MDIAKFHGVG (185 aa). Mg(2+)-binding residues include aspartate 18 and aspartate 116. Residue glutamate 117 is part of the active site.

This sequence belongs to the DNA polymerase type-Y family. As to quaternary structure, monomer. Mg(2+) is required as a cofactor.

The protein resides in the cytoplasm. The catalysed reaction is DNA(n) + a 2'-deoxyribonucleoside 5'-triphosphate = DNA(n+1) + diphosphate. In terms of biological role, poorly processive, error-prone DNA polymerase involved in untargeted mutagenesis. Copies undamaged DNA at stalled replication forks, which arise in vivo from mismatched or misaligned primer ends. These misaligned primers can be extended by PolIV. Exhibits no 3'-5' exonuclease (proofreading) activity. May be involved in translesional synthesis, in conjunction with the beta clamp from PolIII. This is DNA polymerase IV from Streptococcus gordonii (strain Challis / ATCC 35105 / BCRC 15272 / CH1 / DL1 / V288).